Reading from the N-terminus, the 122-residue chain is Large ribosomal subunit protein bL12 (122 aa).

Belongs to the bacterial ribosomal protein bL12 family. In terms of assembly, homodimer. Part of the ribosomal stalk of the 50S ribosomal subunit. Forms a multimeric L10(L12)X complex, where L10 forms an elongated spine to which 2 to 4 L12 dimers bind in a sequential fashion. Binds GTP-bound translation factors.

Functionally, forms part of the ribosomal stalk which helps the ribosome interact with GTP-bound translation factors. Is thus essential for accurate translation. The sequence is that of Large ribosomal subunit protein bL12 from Streptococcus sanguinis (strain SK36).